The sequence spans 251 residues: Elongation factor Ts (251 aa).

The tract at residues 82–85 is involved in Mg(2+) ion dislocation from EF-Tu; it reads TDFV. Positions 215–251 are disordered; that stretch reads QMGQKAPEPVAAAPQVEEKAPEPAAKDNPPAKGKKKK. Low complexity predominate over residues 219–229; it reads KAPEPVAAAPQ. The span at 230-239 shows a compositional bias: basic and acidic residues; sequence VEEKAPEPAA.

It belongs to the EF-Ts family.

It is found in the cytoplasm. Functionally, associates with the EF-Tu.GDP complex and induces the exchange of GDP to GTP. It remains bound to the aminoacyl-tRNA.EF-Tu.GTP complex up to the GTP hydrolysis stage on the ribosome. The polypeptide is Elongation factor Ts (Microcystis aeruginosa (strain NIES-843 / IAM M-2473)).